Reading from the N-terminus, the 463-residue chain is Chaperone SurA (463 aa).

Residues 1 to 25 form the signal peptide; that stretch reads MTRYFSIVLSLLLAVSCVFLPVASA. PpiC domains follow at residues 175–277 and 291–390; these read GAQY…KLVE and ATEY…QRLG. The segment at 439–463 is disordered; the sequence is ADDHHTPSAAVTPATGAVLPAATKH.

Its subcellular location is the periplasm. The catalysed reaction is [protein]-peptidylproline (omega=180) = [protein]-peptidylproline (omega=0). Its function is as follows. Chaperone involved in the correct folding and assembly of outer membrane proteins. Recognizes specific patterns of aromatic residues and the orientation of their side chains, which are found more frequently in integral outer membrane proteins. May act in both early periplasmic and late outer membrane-associated steps of protein maturation. The polypeptide is Chaperone SurA (Xylella fastidiosa (strain Temecula1 / ATCC 700964)).